The primary structure comprises 457 residues: Probable xyloglucan 6-xylosyltransferase 3 (457 aa).

Positions 1–40 are disordered; that stretch reads MGKEDGFRTQKRVSTASSAAAGVLPTTMASGGVRRPPPRG. Residues 1-51 are Cytoplasmic-facing; it reads MGKEDGFRTQKRVSTASSAAAGVLPTTMASGGVRRPPPRGRQIQKTFNNVK. A helical; Signal-anchor for type II membrane protein membrane pass occupies residues 52 to 71; it reads MTILCGFVTILVLRGTIGIN. Topologically, residues 72–457 are lumenal; sequence FGTSDADVVN…TTPLKIEARS (386 aa). 2 N-linked (GlcNAc...) asparagine glycosylation sites follow: Asn115 and Asn431.

This sequence belongs to the glycosyltransferase 34 family.

It is found in the golgi apparatus membrane. It catalyses the reaction Transfers an alpha-D-xylosyl residue from UDP-D-xylose to a glucose residue in xyloglucan, forming an alpha-(1-&gt;6)-D-xylosyl-D-glucose linkage.. Functionally, probable xyloglucan xylosyltransferase involved in the biosynthesis of xyloglucan. This chain is Probable xyloglucan 6-xylosyltransferase 3, found in Arabidopsis thaliana (Mouse-ear cress).